Consider the following 281-residue polypeptide: Large ribosomal subunit protein uL2 (281 aa).

The disordered stretch occupies residues 220–281 (VRGSVMNPND…RRRDGKALSK (62 aa)). The segment covering 258–271 (KTRKKNKQSNKMIM) has biased composition (basic residues). Positions 272–281 (RRRDGKALSK) are enriched in basic and acidic residues.

It belongs to the universal ribosomal protein uL2 family. Part of the 50S ribosomal subunit. Forms a bridge to the 30S subunit in the 70S ribosome.

One of the primary rRNA binding proteins. Required for association of the 30S and 50S subunits to form the 70S ribosome, for tRNA binding and peptide bond formation. It has been suggested to have peptidyltransferase activity; this is somewhat controversial. Makes several contacts with the 16S rRNA in the 70S ribosome. The protein is Large ribosomal subunit protein uL2 of Lachnoclostridium phytofermentans (strain ATCC 700394 / DSM 18823 / ISDg) (Clostridium phytofermentans).